The sequence spans 73 residues: DNA-directed RNA polymerase subunit epsilon (73 aa).

Belongs to the RNA polymerase subunit epsilon family. In terms of assembly, RNAP is composed of a core of 2 alpha, a beta and a beta' subunit. The core is associated with a delta subunit, and at least one of epsilon or omega. When a sigma factor is associated with the core the holoenzyme is formed, which can initiate transcription.

The enzyme catalyses RNA(n) + a ribonucleoside 5'-triphosphate = RNA(n+1) + diphosphate. A non-essential component of RNA polymerase (RNAP). This is DNA-directed RNA polymerase subunit epsilon from Lactobacillus acidophilus (strain ATCC 700396 / NCK56 / N2 / NCFM).